The following is a 591-amino-acid chain: NADH-quinone oxidoreductase subunit C/D (591 aa).

An NADH dehydrogenase I subunit C region spans residues 1-182 (MVTVVENIDP…TPYFLNTAKQ (182 aa)). Residues 206–591 (DFMFLNIGPN…IDVVMADCDR (386 aa)) are NADH dehydrogenase I subunit D.

In the N-terminal section; belongs to the complex I 30 kDa subunit family. This sequence in the C-terminal section; belongs to the complex I 49 kDa subunit family. NDH-1 is composed of 13 different subunits. Subunits NuoB, CD, E, F, and G constitute the peripheral sector of the complex.

It localises to the cell inner membrane. The enzyme catalyses a quinone + NADH + 5 H(+)(in) = a quinol + NAD(+) + 4 H(+)(out). NDH-1 shuttles electrons from NADH, via FMN and iron-sulfur (Fe-S) centers, to quinones in the respiratory chain. The immediate electron acceptor for the enzyme in this species is believed to be ubiquinone. Couples the redox reaction to proton translocation (for every two electrons transferred, four hydrogen ions are translocated across the cytoplasmic membrane), and thus conserves the redox energy in a proton gradient. This Psychrobacter arcticus (strain DSM 17307 / VKM B-2377 / 273-4) protein is NADH-quinone oxidoreductase subunit C/D.